The following is a 934-amino-acid chain: Leucine--tRNA ligase 1 (934 aa).

A 'HIGH' region motif is present at residues 41–51 (PYTNSPMHVGH). Residues 616–620 (KMSKS) carry the 'KMSKS' region motif. K619 is an ATP binding site.

It belongs to the class-I aminoacyl-tRNA synthetase family.

The protein resides in the cytoplasm. The catalysed reaction is tRNA(Leu) + L-leucine + ATP = L-leucyl-tRNA(Leu) + AMP + diphosphate. The sequence is that of Leucine--tRNA ligase 1 from Saccharolobus solfataricus (strain ATCC 35092 / DSM 1617 / JCM 11322 / P2) (Sulfolobus solfataricus).